Here is a 145-residue protein sequence, read N- to C-terminus: 3-dehydroquinate dehydratase (145 aa).

Catalysis depends on Tyr-22, which acts as the Proton acceptor. Positions 71, 77, and 84 each coordinate substrate. Catalysis depends on His-97, which acts as the Proton donor. Residues 98-99 (LS) and Arg-108 each bind substrate.

Belongs to the type-II 3-dehydroquinase family. As to quaternary structure, homododecamer.

It carries out the reaction 3-dehydroquinate = 3-dehydroshikimate + H2O. Its pathway is metabolic intermediate biosynthesis; chorismate biosynthesis; chorismate from D-erythrose 4-phosphate and phosphoenolpyruvate: step 3/7. Catalyzes a trans-dehydration via an enolate intermediate. This is 3-dehydroquinate dehydratase from Francisella tularensis subsp. mediasiatica (strain FSC147).